Reading from the N-terminus, the 360-residue chain is Peptide chain release factor 1 (360 aa).

Gln-235 is modified (N5-methylglutamine).

It belongs to the prokaryotic/mitochondrial release factor family. Post-translationally, methylated by PrmC. Methylation increases the termination efficiency of RF1.

It localises to the cytoplasm. Peptide chain release factor 1 directs the termination of translation in response to the peptide chain termination codons UAG and UAA. This chain is Peptide chain release factor 1, found in Blochmanniella pennsylvanica (strain BPEN).